A 114-amino-acid chain; its full sequence is Adapter SH3BGRL (114 aa).

The interval 13–50 (SMAIKKKQQDVLGFLEANKIGFEEKDIAANEENRKWMR) is required for interaction with HER2. The required for interaction with PFN1, HER2, and ATG12 stretch occupies residues 54–71 (PENSRPATGYPLPPQIFN). The SH3-binding motif lies at 61 to 67 (TGYPLPP).

This sequence belongs to the SH3BGR family. In terms of assembly, monomer. Interacts with PFN1/Profilin-1. Interacts with ERBB2. Interacts with ATG12. Interacts with BECN1. Interacts with translating ribosomes.

It localises to the cytoplasm. The protein localises to the cytosol. It is found in the cell membrane. Functionally, appears to function as an adapter protein that bridges proteins together or proteins with mRNAs. May function as a ubiquitin ligase-substrate adapter. Additionally, associates with translating cytoplasmic ribosomes and may promote the expression of specific mRNAs. The chain is Adapter SH3BGRL (SH3BGRL) from Bos taurus (Bovine).